The chain runs to 203 residues: Guanylate kinase (203 aa).

In terms of domain architecture, Guanylate kinase-like spans 3-181; it reads GTLYIVAAPS…AVSEMCAIFT (179 aa). ATP is bound at residue 10–17; sequence APSGAGKS.

This sequence belongs to the guanylate kinase family.

The protein localises to the cytoplasm. It catalyses the reaction GMP + ATP = GDP + ADP. In terms of biological role, essential for recycling GMP and indirectly, cGMP. The protein is Guanylate kinase of Xanthomonas oryzae pv. oryzae (strain MAFF 311018).